A 595-amino-acid chain; its full sequence is L-fucose isomerase (595 aa).

Catalysis depends on proton acceptor residues E341 and D365. Mn(2+) contacts are provided by E341, D365, and H531.

This sequence belongs to the L-fucose isomerase family. Requires Mn(2+) as cofactor.

It localises to the cytoplasm. The catalysed reaction is L-fucose = L-fuculose. The protein operates within carbohydrate degradation; L-fucose degradation; L-lactaldehyde and glycerone phosphate from L-fucose: step 1/3. Converts the aldose L-fucose into the corresponding ketose L-fuculose. In Clostridium perfringens (strain 13 / Type A), this protein is L-fucose isomerase.